The primary structure comprises 35 residues: Thrombin-like enzyme cerastobin (35 aa).

The Peptidase S1 domain occupies Val1 to Leu35.

Belongs to the peptidase S1 family. Snake venom subfamily. As to quaternary structure, monomer. Expressed by the venom gland.

It is found in the secreted. Inhibited by diisopropylfluorophosphate (DFP). Thrombin-like snake venom serine protease, that cleaves both alpha-chain (FGA) and beta-chain (FGB) of fibrinogen. Partially degrades factor X (F10), and release bradykinin from kininogen (KNG). Potently induces platelet aggregation. Shows a proteolytic activity towards protein constituents of the platelets cytoskeleton. Hydrolyzes actin, actin-binding protein, and P235. Shows a preferential cleavage at Arg-|-Xaa bonds. This Cerastes vipera (Sahara sand viper) protein is Thrombin-like enzyme cerastobin.